We begin with the raw amino-acid sequence, 1592 residues long: Serine/threonine-protein kinase mrck-1 (1592 aa).

The involved in homo-dimerization stretch occupies residues 1–954 (MAEPPPDDSA…IFSPVSISAM (954 aa)). One can recognise a Protein kinase domain in the interval 83 to 351 (FEVLKVIGKG…LSDFQLHPFF (269 aa)). ATP-binding positions include 89-97 (IGKGAFGEV) and Lys-112. Residue Asp-207 is the Proton acceptor of the active site. The AGC-kinase C-terminal domain occupies 352–426 (EGIDWNTIRD…THGSLLSDAR (75 aa)). Ser-415 is modified (phosphoserine). Phosphotyrosine is present on Tyr-416. Coiled-coil stretches lie at residues 444–782 (ELME…KNNS) and 811–871 (LDLQ…IENS). Residues 782–796 (SPLTTSNYIQNTPSG) show a composition bias toward polar residues. The segment at 782–801 (SPLTTSNYIQNTPSGWGSRR) is disordered. Residues 955 to 1534 (ERGHNFERMK…FRTIGKDDRS (580 aa)) are involved in binding to membranes, with a preference for di-phosphorylated phosphoinositides (PIPs). A Phorbol-ester/DAG-type zinc finger spans residues 957–1007 (GHNFERMKIKTPTKCGHCTSILIGLDRQGLFCQSCQYACHVSCAERVSQSC). His-958, Cys-971, Cys-974, Cys-988, Cys-991, His-996, Cys-999, and Cys-1007 together coordinate Zn(2+). The region spanning 1026-1154 (GTAYEGLVKT…WVVALSELKT (129 aa)) is the PH domain. A CNH domain is found at 1181 to 1479 (IRVAQCCAII…KPLSGDGILS (299 aa)). The CRIB domain maps to 1544–1557 (ISTPSDFMHIVHMG). The involved in interaction with cdc-42 (GTP-bound). Deletion prevents rescue of a null mutant; furthermore deleted form of mrck-1 is no longer recruited to the cell cortex and instead appears to be completely cytoplasmic stretch occupies residues 1544 to 1557 (ISTPSDFMHIVHMG).

This sequence belongs to the protein kinase superfamily. AGC Ser/Thr protein kinase family. DMPK subfamily. In terms of assembly, homodimer, via N-terminal domains. Interacts (via the CRIB domain) with cdc-42 (GTP-bound), but with a lower affinity for cdc-42 bound to GDP; the interaction is direct and may play a role in the recruitment of mrck-1 to the apical membrane. Mg(2+) serves as cofactor. Expressed in embryonic and L4 larval seam cells and in embryonic dorsal and ventral epidermal cells. Also expressed in the pharynx throughout development and in sublateral nerve cords in the L4 larva.

The protein localises to the cytoplasm. It localises to the cell cortex. It catalyses the reaction L-seryl-[protein] + ATP = O-phospho-L-seryl-[protein] + ADP + H(+). It carries out the reaction L-threonyl-[protein] + ATP = O-phospho-L-threonyl-[protein] + ADP + H(+). Functionally, serine/threonine-protein kinase. Involved in regulating endoderm precursor cell movements during early gastrulation; activates apical myosin and thereby increases actomyosin contractility and tension in the apical cell cortex, probably as a result of recruitment of mrck-1 to the cortex by a combination of interaction with active cdc-42 and membrane binding. May phosphorylate and inactivate the phosphatase mel-11, and thereby contribute to the regulation of myosin II contractility during embryonic elongation. Involved in controlling canal length and Golgi/ER integrity during excretory canal elongation. The chain is Serine/threonine-protein kinase mrck-1 from Caenorhabditis elegans.